Reading from the N-terminus, the 101-residue chain is NAD(P)H-quinone oxidoreductase subunit 4L, chloroplastic (101 aa).

Transmembrane regions (helical) follow at residues 2 to 22 (MFEH…YGLI), 32 to 52 (MCLE…SDLF), and 61 to 81 (IFSI…LAIV).

The protein belongs to the complex I subunit 4L family. NDH is composed of at least 16 different subunits, 5 of which are encoded in the nucleus.

The protein localises to the plastid. The protein resides in the chloroplast thylakoid membrane. The enzyme catalyses a plastoquinone + NADH + (n+1) H(+)(in) = a plastoquinol + NAD(+) + n H(+)(out). It catalyses the reaction a plastoquinone + NADPH + (n+1) H(+)(in) = a plastoquinol + NADP(+) + n H(+)(out). NDH shuttles electrons from NAD(P)H:plastoquinone, via FMN and iron-sulfur (Fe-S) centers, to quinones in the photosynthetic chain and possibly in a chloroplast respiratory chain. The immediate electron acceptor for the enzyme in this species is believed to be plastoquinone. Couples the redox reaction to proton translocation, and thus conserves the redox energy in a proton gradient. In Lemna minor (Common duckweed), this protein is NAD(P)H-quinone oxidoreductase subunit 4L, chloroplastic.